We begin with the raw amino-acid sequence, 277 residues long: Large ribosomal subunit protein uL2c (277 aa).

Positions 1-11 (MNTRSYSTFTP) are enriched in polar residues. 2 disordered regions span residues 1 to 47 (MNTR…RNNS) and 254 to 277 (YSAL…RRRK).

This sequence belongs to the universal ribosomal protein uL2 family. As to quaternary structure, part of the 50S ribosomal subunit.

It localises to the plastid. The protein localises to the chloroplast. The sequence is that of Large ribosomal subunit protein uL2c (rpl2) from Cryptomeria japonica (Japanese cedar).